The sequence spans 329 residues: Neuropeptides B/W receptor type 1 (329 aa).

Residues 1–43 lie on the Extracellular side of the membrane; sequence MHNLTLFESGGDNVSCGGSSLGCPNGSSLAPLPLPQPLAVAVP. Asn3, Asn13, and Asn25 each carry an N-linked (GlcNAc...) asparagine glycan. Residues 44 to 64 traverse the membrane as a helical segment; it reads VVYGVICAVGLAGNSAVLYVL. At 65–75 the chain is on the cytoplasmic side; sequence LRTPRMKTVTN. The helical transmembrane segment at 76–96 threads the bilayer; the sequence is VFILNLAIADELFTLVLPINI. Residues 97–112 lie on the Extracellular side of the membrane; sequence ADFLLRRWPFGEVMCK. An intrachain disulfide couples Cys111 to Cys190. Residues 113–133 form a helical membrane-spanning segment; it reads LIVAVDQYNTFSSLYFLAVMS. The Cytoplasmic segment spans residues 134-158; it reads ADRYLVVLATAESRRVSGRTYGAAR. A helical membrane pass occupies residues 159-179; the sequence is AVSLAVWALVTLVVLPFAVFA. The Extracellular portion of the chain corresponds to 180–209; the sequence is RLDEEQGRRQCVLVFPQPEAFWWRASRLYT. The helical transmembrane segment at 210–230 threads the bilayer; that stretch reads LVLGFAIPVTTICALYTTLLC. Residues 231 to 250 are Cytoplasmic-facing; sequence RLRAIQLDSHAKALDRAKKR. Residues 251-271 form a helical membrane-spanning segment; sequence VTLLVAAILAVCLLCWTPYHL. Residues 272-289 are Extracellular-facing; the sequence is STIVALTTDLPQTPLVIG. Residues 290–312 traverse the membrane as a helical segment; it reads ISYFITSLSYANSCLNPFLYAFL. The Cytoplasmic portion of the chain corresponds to 313–329; it reads DDSFRRSLRQLVSCRSA.

This sequence belongs to the G-protein coupled receptor 1 family.

It is found in the cell membrane. Functionally, interacts specifically with a number of opioid ligands. Receptor for neuropeptides B and W, which may be involved in neuroendocrine system regulation, food intake and the organization of other signals. This Mus musculus (Mouse) protein is Neuropeptides B/W receptor type 1 (Npbwr1).